The sequence spans 113 residues: Large ribosomal subunit protein P1z (113 aa).

The tract at residues 87-113 is disordered; sequence AAAPAKEEKKDEPAEESDGDLGFGLFD. A Phosphoserine modification is found at Ser103.

The protein belongs to the eukaryotic ribosomal protein P1/P2 family. In terms of assembly, P1 and P2 exist as dimers at the large ribosomal subunit.

In terms of biological role, plays an important role in the elongation step of protein synthesis. The sequence is that of Large ribosomal subunit protein P1z (RPP1B) from Arabidopsis thaliana (Mouse-ear cress).